Consider the following 310-residue polypeptide: Probable GTP 3',8-cyclase (310 aa).

The region spanning 5-232 is the Radical SAM core domain; sequence RFGRPVTNLR…RRRKYFIPID (228 aa). Residue Arg-14 coordinates GTP. Residues Cys-21 and Cys-25 each coordinate [4Fe-4S] cluster. S-adenosyl-L-methionine is bound at residue Tyr-27. Cys-28 is a binding site for [4Fe-4S] cluster. Lys-61 contributes to the GTP binding site. Residue Gly-65 coordinates S-adenosyl-L-methionine. Residue Thr-90 coordinates GTP. Ser-114 serves as a coordination point for S-adenosyl-L-methionine. Lys-150 contributes to the GTP binding site. Met-189 provides a ligand contact to S-adenosyl-L-methionine. Positions 250 and 253 each coordinate [4Fe-4S] cluster. Residue 255-257 participates in GTP binding; that stretch reads RLR. Position 267 (Cys-267) interacts with [4Fe-4S] cluster.

It belongs to the radical SAM superfamily. MoaA family. [4Fe-4S] cluster serves as cofactor.

It catalyses the reaction GTP + AH2 + S-adenosyl-L-methionine = (8S)-3',8-cyclo-7,8-dihydroguanosine 5'-triphosphate + 5'-deoxyadenosine + L-methionine + A + H(+). It functions in the pathway cofactor biosynthesis; molybdopterin biosynthesis. Functionally, catalyzes the cyclization of GTP to (8S)-3',8-cyclo-7,8-dihydroguanosine 5'-triphosphate. This chain is Probable GTP 3',8-cyclase, found in Pyrococcus horikoshii (strain ATCC 700860 / DSM 12428 / JCM 9974 / NBRC 100139 / OT-3).